The following is a 161-amino-acid chain: 2-C-methyl-D-erythritol 2,4-cyclodiphosphate synthase (161 aa).

A divalent metal cation is bound by residues Asp9 and His11. 4-CDP-2-C-methyl-D-erythritol 2-phosphate-binding positions include 9 to 11 (DFH) and 37 to 38 (HS). Residue His45 coordinates a divalent metal cation. 4-CDP-2-C-methyl-D-erythritol 2-phosphate contacts are provided by residues 59 to 61 (DIG), 64 to 68 (FPDTD), 135 to 138 (TTTE), and Arg145.

The protein belongs to the IspF family. In terms of assembly, homotrimer. A divalent metal cation serves as cofactor.

It catalyses the reaction 4-CDP-2-C-methyl-D-erythritol 2-phosphate = 2-C-methyl-D-erythritol 2,4-cyclic diphosphate + CMP. Its pathway is isoprenoid biosynthesis; isopentenyl diphosphate biosynthesis via DXP pathway; isopentenyl diphosphate from 1-deoxy-D-xylulose 5-phosphate: step 4/6. Involved in the biosynthesis of isopentenyl diphosphate (IPP) and dimethylallyl diphosphate (DMAPP), two major building blocks of isoprenoid compounds. Catalyzes the conversion of 4-diphosphocytidyl-2-C-methyl-D-erythritol 2-phosphate (CDP-ME2P) to 2-C-methyl-D-erythritol 2,4-cyclodiphosphate (ME-CPP) with a corresponding release of cytidine 5-monophosphate (CMP). The protein is 2-C-methyl-D-erythritol 2,4-cyclodiphosphate synthase of Leptospira borgpetersenii serovar Hardjo-bovis (strain JB197).